Consider the following 369-residue polypeptide: Anhydro-N-acetylmuramic acid kinase (369 aa).

12–19 (GTSLDGVD) serves as a coordination point for ATP.

This sequence belongs to the anhydro-N-acetylmuramic acid kinase family.

It catalyses the reaction 1,6-anhydro-N-acetyl-beta-muramate + ATP + H2O = N-acetyl-D-muramate 6-phosphate + ADP + H(+). The protein operates within amino-sugar metabolism; 1,6-anhydro-N-acetylmuramate degradation. It functions in the pathway cell wall biogenesis; peptidoglycan recycling. Its function is as follows. Catalyzes the specific phosphorylation of 1,6-anhydro-N-acetylmuramic acid (anhMurNAc) with the simultaneous cleavage of the 1,6-anhydro ring, generating MurNAc-6-P. Is required for the utilization of anhMurNAc either imported from the medium or derived from its own cell wall murein, and thus plays a role in cell wall recycling. In Shigella flexneri serotype 5b (strain 8401), this protein is Anhydro-N-acetylmuramic acid kinase.